The sequence spans 679 residues: MISASRAAVSRFVGTAASRGPTAARHQDGWNGLSHEAFRIVSRRDYASEAIKGAVVGIDLGTTNSCVAVMEGKQAKVLENAEGARTTPSVVAFTADGERLVGMPAKRQAVTNPNNTFYATKRLIGRRYDDPEVQKDIKNVPFKIVRASNGDAWVEAHGKLYSPSQIGAFVLMKMKETAENYLGHTAKNAVITVPAYFNDSQRQATKDAGQISGLNVLRVINEPTAAALAYGLDKSEDKIIAVYDLGGGTFDISILEIQKGVFEVKSTNGDTFLGGEDFDQALLRHIVKEFKRETGVDLTKDNMALQRVREAAEKAKCELSSSVQTDINLPYLTMDASGPKHLNMKLTRAQFEGIVTDLIRRTIAPCQKAMQDAEVSKSDIGEVILVGGMTRMPKVQQTVQDLFGRAPSKAVNPDEAVAIGAAIQGGVLAGDVTDVLLLDVTPLSLGIETLGGVFTKLINRNTTIPTKKSQVFSTAADGQTQVEIKVCQGEREMAGDNKLLGQFTLIGIPPAPRGVPQIEVTFDIDANGIVHVSAKDKGTGREQQIVIQSSGGLSKDDIENMVKNAEKYAEEDRRKKERVEAVNMAEGIIHDTETKMEEFKDQLPADECNKLKEEISKMRELLARKDSETGENIRQAASSLQQASLKLFEMAYKKMASEREGSGSSGTGEQKDNQKEEKQ.

The transit peptide at 1–46 directs the protein to the mitochondrion; the sequence is MISASRAAVSRFVGTAASRGPTAARHQDGWNGLSHEAFRIVSRRDY. Positions 1–432 are interaction with NFS1; that stretch reads MISASRAAVS…IQGGVLAGDV (432 aa). T63 and N64 together coordinate ADP. The nucleotide-binding domain (NBD) stretch occupies residues 63–431; it reads TNSCVAVMEG…AIQGGVLAGD (369 aa). An N6-acetyllysine modification is found at K76. A Phosphothreonine modification is found at T87. Residues K135 and K138 each carry the N6-acetyllysine; alternate modification. An N6-succinyllysine; alternate mark is found at K135 and K138. Residue K143 is modified to N6-acetyllysine. At K206 the chain carries N6-acetyllysine; alternate. The residue at position 206 (K206) is an N6-succinyllysine; alternate. K206 bears the N6-malonyllysine; alternate mark. N6-acetyllysine is present on residues K234 and K288. An N6-acetyllysine; alternate modification is found at K300. An N6-succinyllysine; alternate modification is found at K300. ADP contacts are provided by E313, K316, and S320. An N6-succinyllysine modification is found at K368. ADP is bound by residues G388 and R391. An N6-succinyllysine modification is found at K394. S408 is modified (phosphoserine). The interdomain linker stretch occupies residues 432-441; sequence VTDVLLLDVT. The segment at 432–679 is interaction with FXN and ISCU; the sequence is VTDVLLLDVT…QKDNQKEEKQ (248 aa). The substrate-binding domain (SBD) stretch occupies residues 442 to 679; the sequence is PLSLGIETLG…QKDNQKEEKQ (238 aa). R513 bears the Omega-N-methylarginine mark. 2 positions are modified to N6-acetyllysine; alternate: K567 and K600. An N6-succinyllysine; alternate mark is found at K567 and K600. K610 is modified (N6-succinyllysine). K612 bears the N6-acetyllysine mark. K646 carries the post-translational modification N6-acetyllysine; alternate. K646 is subject to N6-succinyllysine; alternate. The disordered stretch occupies residues 656-679; that stretch reads ASEREGSGSSGTGEQKDNQKEEKQ. Residues 669–679 show a composition bias toward basic and acidic residues; it reads EQKDNQKEEKQ.

The protein belongs to the heat shock protein 70 family. Interacts strongly with the intermediate form of FXN and weakly with its mature form. Interacts with HSCB. Associates with the mitochondrial contact site and cristae organizing system (MICOS) complex, composed of at least MICOS10/MIC10, CHCHD3/MIC19, CHCHD6/MIC25, APOOL/MIC27, IMMT/MIC60, APOO/MIC23/MIC26 and QIL1/MIC13. This complex was also known under the names MINOS or MitOS complex. The MICOS complex associates with mitochondrial outer membrane proteins SAMM50, MTX1, MTX2 and DNAJC11, mitochondrial inner membrane protein TMEM11 and with HSPA9. Interacts with DNLZ, the interaction is required to prevent self-aggregation. Interacts with TESPA1. Interacts with PDPN. Interacts with NFU1, NFS1 and ISCU. Interacts with TP53; the interaction promotes TP53 degradation. Interacts (via SBD domain) with UBXN2A; the interaction with UBXN2A inhibits HSPA9/MOT-2 interaction with and degradation of TP53, thereby promotes TP53 translocation to the nucleus. Interacts with ITPR1 AND VDAC1; this interaction couples ITPR1 to VDAC1. Component of the TIM23 mitochondrial inner membrane pre-sequence translocase complex.

It is found in the mitochondrion. It localises to the nucleus. The protein resides in the nucleolus. Its subcellular location is the cytoplasm. The protein localises to the mitochondrion matrix. It catalyses the reaction ATP + H2O = ADP + phosphate + H(+). With respect to regulation, the chaperone activity is regulated by ATP-induced allosteric coupling of the nucleotide-binding (NBD) and substrate-binding (SBD) domains. ATP binding in the NBD leads to a conformational change in the NBD, which is transferred through the interdomain linker (IDL) to the substrate-binding domain (SBD). This elicits a reduced substrate affinity and a faster substrate exchange rate. Upon hydrolysis of ATP to ADP, the protein undergoes a conformational change that increases its affinity for substrate proteins. It cycles through repeated phases of ATP hydrolysis and nucleotide exchange, facilitating repeated cycles of substrate binding and release. Functions in collaboration with co-chaperones. Functions with the co-chaperone, DNLZ, to maintain solubility and regulate ATP hydrolysis. Nucleotide exchange factors, GRPEL1 and GRPEL2, accelerate nucleotide exchange. Mitochondrial chaperone that plays a key role in mitochondrial protein import, folding, and assembly. Plays an essential role in the protein quality control system, the correct folding of proteins, the re-folding of misfolded proteins, and the targeting of proteins for subsequent degradation. These processes are achieved through cycles of ATP binding, ATP hydrolysis, and ADP release, mediated by co-chaperones. In mitochondria, it associates with the TIM (translocase of the inner membrane) protein complex to assist in the import and folding of mitochondrial proteins. Plays an important role in mitochondrial iron-sulfur cluster (ISC) biogenesis, interacts with and stabilizes ISC cluster assembly proteins FXN, NFU1, NFS1 and ISCU. Regulates erythropoiesis via stabilization of ISC assembly. Regulates mitochondrial calcium-dependent apoptosis by coupling two calcium channels, ITPR1 and VDAC1, at the mitochondria-associated endoplasmic reticulum (ER) membrane to facilitate calcium transport from the ER lumen to the mitochondria intermembrane space, providing calcium for the downstream calcium channel MCU, which releases it into the mitochondrial matrix. Although primarily located in the mitochondria, it is also found in other cellular compartments. In the cytosol, it associates with proteins involved in signaling, apoptosis, or senescence. It may play a role in cell cycle regulation via its interaction with and promotion of degradation of TP53. May play a role in the control of cell proliferation and cellular aging. Protects against reactive oxygen species (ROS). Extracellular HSPA9 plays a cytoprotective role by preventing cell lysis following immune attack by the membrane attack complex by disrupting formation of the complex. The polypeptide is Stress-70 protein, mitochondrial (Bos taurus (Bovine)).